Reading from the N-terminus, the 398-residue chain is S-adenosylmethionine synthase (398 aa).

Residue His-19 participates in ATP binding. Position 21 (Asp-21) interacts with Mg(2+). A K(+)-binding site is contributed by Glu-47. Positions 60 and 103 each coordinate L-methionine. The segment at 103-113 is flexible loop; the sequence is QSPDIAQGVDV. Residues 177-179, 243-244, Asp-252, 258-259, Ala-275, and Lys-279 each bind ATP; these read DGK, RF, and RK. L-methionine is bound at residue Asp-252. Lys-283 serves as a coordination point for L-methionine.

Belongs to the AdoMet synthase family. In terms of assembly, homotetramer; dimer of dimers. Mg(2+) serves as cofactor. Requires K(+) as cofactor.

It is found in the cytoplasm. The enzyme catalyses L-methionine + ATP + H2O = S-adenosyl-L-methionine + phosphate + diphosphate. The protein operates within amino-acid biosynthesis; S-adenosyl-L-methionine biosynthesis; S-adenosyl-L-methionine from L-methionine: step 1/1. Its function is as follows. Catalyzes the formation of S-adenosylmethionine (AdoMet) from methionine and ATP. The overall synthetic reaction is composed of two sequential steps, AdoMet formation and the subsequent tripolyphosphate hydrolysis which occurs prior to release of AdoMet from the enzyme. In Symbiobacterium thermophilum (strain DSM 24528 / JCM 14929 / IAM 14863 / T), this protein is S-adenosylmethionine synthase.